The primary structure comprises 1019 residues: Sca1 complex protein phr (1019 aa).

Disordered regions lie at residues 89–118, 131–202, 265–287, and 512–546; these read IVIN…SSNF, AFNN…INNN, QQLN…NSAN, and STNN…TNNL. Residues 93-102 show a composition bias toward low complexity; sequence SSSSSSSSSS. Positions 141–155 are enriched in basic and acidic residues; it reads NRKEKEKDKDKDHQD. Positions 158-188 form a coiled coil; that stretch reads NINNINNINNNINNNINNNNNNNNNNNNNNN. The segment covering 158–202 has biased composition (low complexity); it reads NINNINNINNNINNNINNNNNNNNNNNNNNNMHNPTSSSPSINNN. The region spanning 735–836 is the PH domain; the sequence is EIKKKGYLFK…WIKAIKFNCF (102 aa). Positions 860-872 are enriched in low complexity; the sequence is VAGSGSNNGNNNG. Disordered regions lie at residues 860–890, 904–951, and 977–1019; these read VAGS…GSFI, NLSI…QQQL, and SSYT…SKLK. Positions 879-890 are enriched in polar residues; sequence TTQQLNNSGSFI. Low complexity predominate over residues 977 to 986; it reads SSYTDSMSGS. The segment covering 987-1019 has biased composition (polar residues); that stretch reads PPDSNGQVFPQSPQLKKTLFQRTTSFSKGSKLK.

In terms of assembly, component of the Sca1 complex composed of at least gefA, gefH, scaA, phr, and the protein phosphatase 2A subunits pppA and pho2B. Interacts directly with gefH.

Its subcellular location is the cell membrane. Component of the Sca1 complex, a regulator of cell motility, chemotaxis and signal relay. The Sca1 complex is recruited to the plasma membrane in a chemoattractant- and F-actin-dependent manner and is enriched at the leading edge of chemotaxing cells where it regulates F-actin dynamics and signal relay by controlling the activation of rasC and the downstream target of rapamycin complex 2 (TORC2)-Akt/protein kinase B (PKB) pathway. The protein is Sca1 complex protein phr of Dictyostelium discoideum (Social amoeba).